We begin with the raw amino-acid sequence, 170 residues long: uncharacterized protein (170 aa).

The chain crosses the membrane as a helical span at residues 96 to 116 (FSAISIGSFPIVLFLSLFFFD).

The protein resides in the membrane. This is an uncharacterized protein from Borreliella burgdorferi (strain ATCC 35210 / DSM 4680 / CIP 102532 / B31) (Borrelia burgdorferi).